A 351-amino-acid polypeptide reads, in one-letter code: Prohormone-2 (351 aa).

The first 21 residues, 1 to 21 (MMCDWVWLLLTLCSLLMIVQS), serve as a signal peptide directing secretion. 2 propeptides span residues 22–177 (LPTN…QTQV) and 192–319 (ELDI…MISR). Residues 51–69 (GNQQNHQPENNPSSSYSST) are compositionally biased toward polar residues. Disordered regions lie at residues 51–71 (GNQQNHQPENNPSSSYSSTAE) and 136–176 (NEDR…VQTQ). The span at 136–145 (NEDRRKRSEK) shows a compositional bias: basic and acidic residues. Residues 158–176 (PSTTSFQSPTSTQQSVQTQ) are compositionally biased toward low complexity.

It is found in the secreted. In Apis mellifera (Honeybee), this protein is Prohormone-2.